The chain runs to 105 residues: Class II hydrophobin 1 (105 aa).

Positions 1–15 are cleaved as a signal peptide; that stretch reads MQVLLIATLVASVLA. Disulfide bonds link Cys-38-Cys-87, Cys-48-Cys-78, Cys-49-Cys-58, and Cys-88-Cys-99.

Belongs to the cerato-ulmin hydrophobin family. As to quaternary structure, homotetramer. Further self-assembles to form highly ordered films at water-air interfaces through intermolecular interactions.

Its subcellular location is the secreted. The protein localises to the cell wall. In terms of biological role, aerial growth, conidiation, and dispersal of filamentous fungi in the environment rely upon a capability of their secreting small amphipathic proteins called hydrophobins (HPBs) with low sequence identity. Class I can self-assemble into an outermost layer of rodlet bundles on aerial cell surfaces, conferring cellular hydrophobicity that supports fungal growth, development and dispersal; whereas Class II form highly ordered films at water-air interfaces through intermolecular interactions but contribute nothing to the rodlet structure. HYD1 is a class II hydrophobin that plays roles in conidiation and cuticle-bypassing infection by regulating the transcripts of frequency clock protein frq, and velvet protein vosA, as well as primordium formation via the mitogen-activated protein kinase signaling pathway. Also participates in stress response, including tolerance of mycelia to osmotic and oxidative stresses, and conidia to high or low temperature. Acts as a defensive factor against Calcarisporium cordycipiticola infection, probably via the formation of a physical barrier to inhibit the pathogen infection owing to its hydrophobicity or binding to the effector of C.cordycipiticola, hindering the recognition of the pathogen. Finally, regulates the transcription of the AreA transcription factor at different developmental stages via a positive feedback loop. This chain is Class II hydrophobin 1, found in Cordyceps militaris (Caterpillar fungus).